We begin with the raw amino-acid sequence, 259 residues long: Ribonuclease PH (259 aa).

Phosphate-binding positions include R88 and 126 to 128 (GTR).

The protein belongs to the RNase PH family. Homohexameric ring arranged as a trimer of dimers.

It catalyses the reaction tRNA(n+1) + phosphate = tRNA(n) + a ribonucleoside 5'-diphosphate. Phosphorolytic 3'-5' exoribonuclease that plays an important role in tRNA 3'-end maturation. Removes nucleotide residues following the 3'-CCA terminus of tRNAs; can also add nucleotides to the ends of RNA molecules by using nucleoside diphosphates as substrates, but this may not be physiologically important. Probably plays a role in initiation of 16S rRNA degradation (leading to ribosome degradation) during starvation. The chain is Ribonuclease PH from Mycolicibacterium smegmatis (strain ATCC 700084 / mc(2)155) (Mycobacterium smegmatis).